We begin with the raw amino-acid sequence, 310 residues long: MSLSTLFSPNTYNINSKSQTLNNLPSNPTSQTNTLWSNNAYNPPHLMFGSTDLSNGGGGGGQKGEKGDKGETGSNGLKGETGSNGLKGETGSGDKGDKGDSGTDGLKGQAGTDGLKGQAGTDGLKGDSGTDGLKGQTGNDGLKGQAGNDGIKGDKGEPGNDGLKGQTGTQGIKGDPGAKGDPGTSVVLSSGIWTPSVTFSTIFTGITPSTSIYSRIGNIVTFSIFTNATIPANMASGIIYFTVPVASSDFNGNNVIGTASITGNSTGVVQYGILTATASTAGIVLSMKIQASTSISVAIYATGQYFIPPG.

Residues 1-41 (MSLSTLFSPNTYNINSKSQTLNNLPSNPTSQTNTLWSNNAY) are compositionally biased toward polar residues. A disordered region spans residues 1–183 (MSLSTLFSPN…GDPGAKGDPG (183 aa)). 2 consecutive Collagen-like domains span residues 61–119 (GQKG…KGQA) and 123–182 (GLKG…KGDP). Basic and acidic residues predominate over residues 92 to 101 (SGDKGDKGDS). 2 N-linked (GlcNAc...) asparagine; by host glycosylation sites follow: Asn-227 and Asn-264.

Belongs to the sputnik virus V6 family.

This chain is Collagen-like protein V6, found in Sputnik virophage.